Here is a 99-residue protein sequence, read N- to C-terminus: MALTVETKKRPEGSKPKALRRAGFIPANLYGHNGRESISLVVDAKVVERLLKAAAVKKTEIELNIPELEWTGKTILQEVQIHPAKGTPYHISFLATAKG.

The protein belongs to the bacterial ribosomal protein bL25 family. In terms of assembly, part of the 50S ribosomal subunit; part of the 5S rRNA/L5/L18/L25 subcomplex. Contacts the 5S rRNA. Binds to the 5S rRNA independently of L5 and L18.

Its function is as follows. This is one of the proteins that binds to the 5S RNA in the ribosome where it forms part of the central protuberance. The protein is Large ribosomal subunit protein bL25 of Nostoc sp. (strain PCC 7120 / SAG 25.82 / UTEX 2576).